The sequence spans 207 residues: MGMLEARELLCERDERTLFSGLSFTLNAGEWVQITGSNGAGKTTLLRLLTGLSRPDAGEVLWQGQPLHQVRDSYHQTLLWIGHQPGIKTRLTALENLHFYHRDGDAAQCLEALAQAGLAGFEDIPVNQLSAGQQRRVALARLWLTRATLWILDEPFTAIDVNGVDRLTQRMAQHTEQGGIVILTTHQPLNVAESKIRRISLTQTRAA.

The ABC transporter domain occupies 4-207 (LEARELLCER…RISLTQTRAA (204 aa)). Position 36 to 43 (36 to 43 (GSNGAGKT)) interacts with ATP.

This sequence belongs to the ABC transporter superfamily. CcmA exporter (TC 3.A.1.107) family. In terms of assembly, the complex is composed of two ATP-binding proteins (CcmA) and two transmembrane proteins (CcmB).

It is found in the cell inner membrane. The catalysed reaction is heme b(in) + ATP + H2O = heme b(out) + ADP + phosphate + H(+). In terms of biological role, part of the ABC transporter complex CcmAB involved in the biogenesis of c-type cytochromes; once thought to export heme, this seems not to be the case, but its exact role is uncertain. Responsible for energy coupling to the transport system. The sequence is that of Cytochrome c biogenesis ATP-binding export protein CcmA from Shigella flexneri.